The primary structure comprises 658 residues: Ubiquilin-3 (658 aa).

In terms of domain architecture, Ubiquitin-like spans 22-96; the sequence is IRVTVKTPKD…VHLVIKMQRR (75 aa). In terms of domain architecture, STI1 spans 194 to 233; sequence NPHMQHLIQQNPEIGHILNNPEIMRQTMEFLRNPSMMQEM. Residues 280–291 show a composition bias toward low complexity; sequence TATTASTTTTSS. Disordered regions lie at residues 280 to 336 and 362 to 478; these read TATT…RNRL and YLQG…PESP. Residues 312 to 323 show a composition bias toward gly residues; sequence VSGGRQGRGGRQ. Composition is skewed to polar residues over residues 362 to 379, 389 to 400, and 438 to 469; these read YLQGTVPTSNPSQESPLS, SSPKSGSGQSLP, and TGPSTSLPNLTSQIGDSANRSSFVSTPSSLMS. The 45-residue stretch at 614–658 folds into the UBA domain; it reads QLEAHFRVQLEQLRAMGFLNLEANLQALIATEGDVDAAVEKLRKS.

As to expression, testis-specific (at protein level).

The protein is Ubiquilin-3 (Ubqln3) of Mus musculus (Mouse).